The following is a 462-amino-acid chain: Glutamate--tRNA ligase 2 (462 aa).

The short motif at Pro8–Gly18 is the 'HIGH' region element. A 'KMSKS' region motif is present at residues Lys236–Arg240. ATP is bound at residue Lys239.

Belongs to the class-I aminoacyl-tRNA synthetase family. Glutamate--tRNA ligase type 1 subfamily. As to quaternary structure, monomer.

Its subcellular location is the cytoplasm. It carries out the reaction tRNA(Glu) + L-glutamate + ATP = L-glutamyl-tRNA(Glu) + AMP + diphosphate. Functionally, catalyzes the attachment of glutamate to tRNA(Glu) in a two-step reaction: glutamate is first activated by ATP to form Glu-AMP and then transferred to the acceptor end of tRNA(Glu). This Nitratiruptor sp. (strain SB155-2) protein is Glutamate--tRNA ligase 2.